The following is a 407-amino-acid chain: Leucine-rich repeat-containing protein 42 (407 aa).

LRR repeat units lie at residues 138 to 159, 163 to 184, 191 to 211, 223 to 243, and 247 to 268; these read VLKSLCLRNRYLLISERLEEIR, SLECLDLYGCRLGDNHELFKYI, SLVKLFMGANCLSDAGLQRLT, NLQLLDLSENHITEKGLRYLT, and TLQKLDLSGTKVMMDVSLKGFF. The tract at residues 360-389 is disordered; that stretch reads VQSSPSGETHSTHKSRKRRLSTEEEQSAAP.

It belongs to the LRRC42 family.

In Danio rerio (Zebrafish), this protein is Leucine-rich repeat-containing protein 42 (lrrc42).